Consider the following 286-residue polypeptide: uncharacterized protein (286 aa).

The signal sequence occupies residues 1-19; sequence MISKEYISLLSALLTKGYS.

This is an uncharacterized protein from Acidianus filamentous virus 2 (isolate Italy/Pozzuoli) (AFV-2).